The sequence spans 148 residues: Putative antiporter subunit mnhG2 (148 aa).

3 helical membrane-spanning segments follow: residues 11 to 31 (IAAIMIFLGSIIALISSIGLI), 51 to 71 (VLLTLVGVIIFFISSQGYLSV), and 72 to 92 (RLILALVFINLTSPVGGHLIS). The interval 125-148 (EQLKQRAHEREERRRKTYEKEHDY) is disordered. Positions 127-148 (LKQRAHEREERRRKTYEKEHDY) are enriched in basic and acidic residues.

Belongs to the CPA3 antiporters (TC 2.A.63) subunit G family. In terms of assembly, may form a heterooligomeric complex that consists of seven subunits: mnhA2, mnhB2, mnhC2, mnhD2, mnhE2, mnhF2 and mnhG2.

The protein resides in the cell membrane. The chain is Putative antiporter subunit mnhG2 (mnhG2) from Staphylococcus saprophyticus subsp. saprophyticus (strain ATCC 15305 / DSM 20229 / NCIMB 8711 / NCTC 7292 / S-41).